The primary structure comprises 583 residues: Lamin-B3 (583 aa).

The disordered stretch occupies residues M1–E30. The head stretch occupies residues A2 to E32. Polar residues predominate over residues A15 to S26. Residue S21 is modified to Phosphoserine. The region spanning E30–L386 is the IF rod domain. The segment at D33 to E67 is coil 1A. A linker 1 region spans residues V68–L79. Positions Y80–K215 are coil 1B. The linker 2 stretch occupies residues E216 to E242. Residues A243–Q384 form a coil 2 region. The segment at E383–V431 is disordered. A tail region spans residues R385–C580. Polar residues predominate over residues P390 to R408. S391 carries the phosphoserine modification. The LTD domain occupies Y429–R546. A Cysteine methyl ester modification is found at C580. A lipid anchor (S-farnesyl cysteine) is attached at C580. A propeptide spans S581–M583 (removed in mature form).

Belongs to the intermediate filament family. Post-translationally, phosphorylation plays a key role in lamin organization, subcellular localization and nuclear envelope disintegration. Phosphorylation by CDK1 at Ser-21 at the onset of mitosis drives lamin disassembly and nuclear envelope breakdown.

It is found in the nucleus lamina. Its subcellular location is the nucleus envelope. It localises to the nucleus. The protein localises to the nucleoplasm. The protein resides in the nucleus matrix. Functionally, lamins are intermediate filament proteins that assemble into a filamentous meshwork, and which constitute the major components of the nuclear lamina, a fibrous layer on the nucleoplasmic side of the inner nuclear membrane. Lamins provide a framework for the nuclear envelope, bridging the nuclear envelope and chromatin, thereby playing an important role in nuclear assembly, chromatin organization, nuclear membrane and telomere dynamics. The structural integrity of the lamina is strictly controlled by the cell cycle, as seen by the disintegration and formation of the nuclear envelope in prophase and telophase, respectively. The polypeptide is Lamin-B3 (lmnb3.L) (Xenopus laevis (African clawed frog)).